Consider the following 252-residue polypeptide: 2-succinyl-6-hydroxy-2,4-cyclohexadiene-1-carboxylate synthase (252 aa).

It belongs to the AB hydrolase superfamily. MenH family. Monomer.

It carries out the reaction 5-enolpyruvoyl-6-hydroxy-2-succinyl-cyclohex-3-ene-1-carboxylate = (1R,6R)-6-hydroxy-2-succinyl-cyclohexa-2,4-diene-1-carboxylate + pyruvate. It participates in quinol/quinone metabolism; 1,4-dihydroxy-2-naphthoate biosynthesis; 1,4-dihydroxy-2-naphthoate from chorismate: step 3/7. It functions in the pathway quinol/quinone metabolism; menaquinone biosynthesis. Its function is as follows. Catalyzes a proton abstraction reaction that results in 2,5-elimination of pyruvate from 2-succinyl-5-enolpyruvyl-6-hydroxy-3-cyclohexene-1-carboxylate (SEPHCHC) and the formation of 2-succinyl-6-hydroxy-2,4-cyclohexadiene-1-carboxylate (SHCHC). The chain is 2-succinyl-6-hydroxy-2,4-cyclohexadiene-1-carboxylate synthase from Escherichia coli O17:K52:H18 (strain UMN026 / ExPEC).